The primary structure comprises 713 residues: Vacuolar amino acid transporter 4 (713 aa).

The interval 1 to 33 (MVTNNGDGEHLGIRRNGNLRHPSNNMKIPRRAQ) is disordered. Topologically, residues 1 to 242 (MVTNNGDGEH…IDKVPFLTRN (242 aa)) are vacuolar. Over residues 21–33 (HPSNNMKIPRRAQ) the composition is skewed to polar residues. Ser-88 is subject to Phosphoserine. The tract at residues 99–121 (RSSVSHGNEAIPRVNPTKNSSAS) is disordered. Phosphoserine is present on residues Ser-130 and Ser-165. A disordered region spans residues 200–233 (KRQEHQLNDSASSDFTSHESDSINQSSPSSNQDI). Residues 221 to 231 (SINQSSPSSNQ) are compositionally biased toward low complexity. The helical transmembrane segment at 243 to 263 (FLEFLYVFGHFAGESFEDDFI) threads the bilayer. Residues 264–301 (PDSSNMMIRGEDERSALLSRPDHMKVLPSAKGTTSTKK) are Cytoplasmic-facing. A helical membrane pass occupies residues 302-322 (VFLILLKSFIGTGVLFLPNAF). At 323–326 (HNGG) the chain is on the vacuolar side. A helical transmembrane segment spans residues 327–347 (LFFSVSMLAFFGIYSYWCYYI). At 348 to 373 (LVQAKSSCGVSSFGDIGLKLYGPWMR) the chain is on the cytoplasmic side. A helical transmembrane segment spans residues 374-394 (IIILFSLVITQVGFSGAYMIF). The Vacuolar portion of the chain corresponds to 395 to 410 (TAKNLQAFLDNVFHVG). A helical membrane pass occupies residues 411–431 (VLPLSYLMVFQTIIFIPLSFI). Over 432-438 (RNISKLS) the chain is Cytoplasmic. The helical transmembrane segment at 439 to 459 (LPSLLANFFIMAGLVIVIIFT) threads the bilayer. At 460–483 (AKRLFFDLMGTPAMGVVYGLNADR) the chain is on the vacuolar side. Residues 484 to 504 (WTLFIGTAIFAFEGIGLIIPV) traverse the membrane as a helical segment. Residues 505–515 (QDSMRNPEKFP) are Cytoplasmic-facing. A helical membrane pass occupies residues 516–536 (LVLALVILTATILFISIATLG). Residues 537–561 (YLAYGSNVQTVILLNLPQSNIFVNL) are Vacuolar-facing. Residues 562-582 (IQLFYSIAIMLSTPLQLFPAI) traverse the membrane as a helical segment. The Cytoplasmic segment spans residues 583–621 (KIIENKFFPKFTKIYVKHDDLTTRVELRPNSGKLNWKIK). A helical membrane pass occupies residues 622–642 (WLKNFIRSIIVIIVVSIAYFG). Residues 643–648 (SDNLDK) are Vacuolar-facing. The chain crosses the membrane as a helical span at residues 649–669 (FVSVIGSLACIPLVYIYPSML). Topologically, residues 670-692 (HLRGNSLPETKGEFWRFKPMLDT) are cytoplasmic. A helical transmembrane segment spans residues 693-711 (ILIFFGIASMLYTSYQSIF). Over 712–713 (GV) the chain is Vacuolar.

Belongs to the amino acid/polyamine transporter 2 family.

The protein localises to the vacuole membrane. In terms of biological role, involved in amino acid efflux from the vacuole to the cytoplasm. Capable of transporting large neutral amino acids including tyrosine, glutamine, asparagine, isoleucine and leucine. This Saccharomyces cerevisiae (strain ATCC 204508 / S288c) (Baker's yeast) protein is Vacuolar amino acid transporter 4 (AVT4).